The sequence spans 385 residues: Probable endopeptidase MT2245 (385 aa).

Residues 235–257 (AALPPGAPPGDGPAPGVAPPPGG) are compositionally biased toward pro residues. Residues 235–268 (AALPPGAPPGDGPAPGVAPPPGGMPGLPFVQPDG) are disordered. The NlpC/P60 domain maps to 270-385 (GGDRTAVVQA…SGPIYDARRY (116 aa)). Cys300 serves as the catalytic Nucleophile. The active-site Proton acceptor is His348. His360 is an active-site residue.

This sequence belongs to the peptidase C40 family.

The polypeptide is Probable endopeptidase MT2245 (Mycobacterium tuberculosis (strain CDC 1551 / Oshkosh)).